Here is a 320-residue protein sequence, read N- to C-terminus: Olfactory receptor 5C1 (320 aa).

The Extracellular portion of the chain corresponds to 1-29; it reads MNSENLTRAAVAPAEFVLLGITNRWDLRV. Residue N5 is glycosylated (N-linked (GlcNAc...) asparagine). Residues 30–50 traverse the membrane as a helical segment; the sequence is ALFLTCLPVYLVSLLGNMGMA. Residues 51-58 are Cytoplasmic-facing; that stretch reads LLIRMDAR. A helical membrane pass occupies residues 59–79; that stretch reads LHTPMYFFLANLSLLDACYSS. At 80-103 the chain is on the extracellular side; sequence AIGPKMLVDLLLPRATIPYTACAL. An intrachain disulfide couples C101 to C193. A helical transmembrane segment spans residues 104-124; the sequence is QMFVFAGLADTECCLLAAMAY. The Cytoplasmic portion of the chain corresponds to 125–143; it reads DRYVAIRNPLLYTTAMSQR. The chain crosses the membrane as a helical span at residues 144–164; sequence LCLALLGASGLGGAVSAFVHT. At 165 to 200 the chain is on the extracellular side; sequence TLTFRLSFCRSRKINSFFCDIPPLLAISCSDTSLNE. Residues 201–221 form a helical membrane-spanning segment; sequence LLLFAICGFIQTATVLAITVS. At 222 to 241 the chain is on the cytoplasmic side; that stretch reads YGFIAGAVIHMRSVEGSRRA. Residues 242 to 262 traverse the membrane as a helical segment; the sequence is ASTGGSHLTAVAMMYGTLIFM. At 263–275 the chain is on the extracellular side; the sequence is YLRPSSSYALDTD. A helical transmembrane segment spans residues 276–296; the sequence is KMASVFYTLVIPSLNPLIYSL. Residues 297 to 320 lie on the Cytoplasmic side of the membrane; sequence RNKEVKEALRQTWSRFHCPGQGSQ.

Belongs to the G-protein coupled receptor 1 family.

Its subcellular location is the cell membrane. Its function is as follows. Odorant receptor. The polypeptide is Olfactory receptor 5C1 (OR5C1) (Homo sapiens (Human)).